The primary structure comprises 205 residues: Protease (205 aa).

Active-site residues include His-54, Asp-71, and Cys-120.

The protein belongs to the peptidase C5 family. As to quaternary structure, interacts with protease cofactor pVI-C; this interaction is necessary for protease activation.

The protein localises to the virion. It is found in the host nucleus. The catalysed reaction is Cleaves proteins of the adenovirus and its host cell at two consensus sites: -Yaa-Xaa-Gly-Gly-|-Xaa- and -Yaa-Xaa-Gly-Xaa-|-Gly- (in which Yaa is Met, Ile or Leu, and Xaa is any amino acid).. Its activity is regulated as follows. Requires DNA and protease cofactor for maximal activation. Inside nascent virions, becomes partially activated by binding to the viral DNA, allowing it to cleave the cofactor that binds to the protease and fully activates it. Actin, like the viral protease cofactor, seems to act as a cofactor in the cleavage of cytokeratin 18 and of actin itself. Functionally, cleaves viral precursor proteins (pTP, pIIIa, pVI, pVII, pVIII, and pX) inside newly assembled particles giving rise to mature virions. Protease complexed to its cofactor slides along the viral DNA to specifically locate and cleave the viral precursors. Mature virions have a weakened organization compared to the unmature virions, thereby facilitating subsequent uncoating. Without maturation, the particle lacks infectivity and is unable to uncoat. Late in adenovirus infection, in the cytoplasm, may participate in the cytoskeleton destruction. Cleaves host cell cytoskeletal keratins K7 and K18. The chain is Protease from Bos taurus (Bovine).